The sequence spans 736 residues: Protein DSF2 (736 aa).

Over residues 1 to 10 (MNQNLKNTSW) the composition is skewed to polar residues. Disordered stretches follow at residues 1-46 (MNQN…DSQF), 178-208 (SGMKPQMNRNEKDYKYPNLENGNRSTNSPNP), 229-410 (ISDN…SGEN), and 440-461 (FKTASTPQSSTDKKKNSKARPN). Over residues 14–24 (IGSDDQERKAN) the composition is skewed to basic and acidic residues. 2 stretches are compositionally biased toward polar residues: residues 25-46 (SSEVSQSPPPNNSFESSMDSQF) and 197-208 (ENGNRSTNSPNP). The segment covering 238–256 (NNANSKNNRTTSNNINTST) has biased composition (low complexity). Polar residues predominate over residues 264-284 (KQSCPNEFTTTQKSNCLYRNG). 3 stretches are compositionally biased toward low complexity: residues 285 to 294 (SSTSTNTSFS), 303 to 318 (KTQSSFESESSSFSKL), and 335 to 350 (SNSSTSTITKTNTMTN). A compositionally biased stretch (basic residues) spans 374 to 385 (KLFKSPRTRAKN). The span at 392–410 (EGSSPIRSATNSLDFSGEN) shows a compositional bias: polar residues.

This chain is Protein DSF2 (DSF2), found in Saccharomyces cerevisiae (strain ATCC 204508 / S288c) (Baker's yeast).